A 197-amino-acid polypeptide reads, in one-letter code: MIPIVIEESGRGERAFDIYSRLLRERIIFLGEAVTSDSANRIVAQMLFLEAEDPEKDIYLYINSPGGSVYDGLGIFDTMQHIKPDVHTVCVGLAASMGAFLLCAGTKGKRSSLQHSRIMIHQPLGGAQGQASDIRIQADEILFLKERLNKELSDRTGQTLDRIQQDTDRDFFMSPTEAMNYGLIDSVIDKRPVQAVA.

Residue Ser-96 is the Nucleophile of the active site. His-121 is an active-site residue.

This sequence belongs to the peptidase S14 family. Fourteen ClpP subunits assemble into 2 heptameric rings which stack back to back to give a disk-like structure with a central cavity, resembling the structure of eukaryotic proteasomes.

The protein resides in the cytoplasm. The enzyme catalyses Hydrolysis of proteins to small peptides in the presence of ATP and magnesium. alpha-casein is the usual test substrate. In the absence of ATP, only oligopeptides shorter than five residues are hydrolyzed (such as succinyl-Leu-Tyr-|-NHMec, and Leu-Tyr-Leu-|-Tyr-Trp, in which cleavage of the -Tyr-|-Leu- and -Tyr-|-Trp bonds also occurs).. In terms of biological role, cleaves peptides in various proteins in a process that requires ATP hydrolysis. Has a chymotrypsin-like activity. Plays a major role in the degradation of misfolded proteins. This is ATP-dependent Clp protease proteolytic subunit 2 from Synechococcus sp. (strain CC9605).